A 144-amino-acid polypeptide reads, in one-letter code: Maximins 3/H14 (144 aa).

The N-terminal stretch at 1-18 is a signal peptide; sequence MNFKYIVAVSFLIASAYA. Propeptides lie at residues 19 to 43 and 73 to 122; these read RSVQ…REIR and RTAE…KKEK. At Ile143 the chain carries Isoleucine amide.

The protein belongs to the bombinin family. As to expression, expressed by the skin glands.

It localises to the secreted. Its function is as follows. Maximin-3 shows antibacterial activity against both Gram-positive and Gram-negative bacteria. It also shows antimicrobial activity against the fungus C.albicans, but not against A.flavus nor P.uticale. It has little hemolytic activity. It possess a significant cytotoxicity against tumor cell lines. It possess a significant anti-HIV activity. It shows high spermicidal activity. Maximin-H14 shows antimicrobial activity against bacteria and against the fungus C.albicans. Shows strong hemolytic activity. This is Maximins 3/H14 from Bombina maxima (Giant fire-bellied toad).